Here is a 137-residue protein sequence, read N- to C-terminus: Ubiquitin-conjugating enzyme variant MMS2 (137 aa).

The UBC core domain occupies 5–137 (PRNFRLLEEL…LRQPKEGETF (133 aa)). The residue at position 71 (serine 71) is a Phosphoserine.

This sequence belongs to the ubiquitin-conjugating enzyme family. Heterodimer with UBC13.

Its function is as follows. Has a role in the DNA error-free postreplication repair (PRR) pathway. Lacks catalytic activity by itself. The UBC13/MMS2 heterodimer catalyzes the synthesis of non-canonical poly-ubiquitin chains that are linked through 'Lys-63'. This Saccharomyces cerevisiae (strain ATCC 204508 / S288c) (Baker's yeast) protein is Ubiquitin-conjugating enzyme variant MMS2 (MMS2).